We begin with the raw amino-acid sequence, 272 residues long: Phosphatidylglycerol--prolipoprotein diacylglyceryl transferase (272 aa).

7 consecutive transmembrane segments (helical) span residues 17-37, 59-79, 95-115, 129-149, 176-196, 202-222, and 237-257; these read LAIRWYGLMYLAGFIMFLGFG, MLFFGVLGVILGGRLGYVLFY, WEGGMAFHGGFLGVVVAMWLF, FIAPMIPCGLAAGRIGNFING, SQLYQFAGEGVALFIVLWLFA, MGAVSGVFLIGYGAFRFAAEF, and LSMGQWLSLPMILAGIAMVVW. Arg142 is a binding site for a 1,2-diacyl-sn-glycero-3-phospho-(1'-sn-glycerol).

This sequence belongs to the Lgt family.

The protein resides in the cell inner membrane. The catalysed reaction is L-cysteinyl-[prolipoprotein] + a 1,2-diacyl-sn-glycero-3-phospho-(1'-sn-glycerol) = an S-1,2-diacyl-sn-glyceryl-L-cysteinyl-[prolipoprotein] + sn-glycerol 1-phosphate + H(+). Its pathway is protein modification; lipoprotein biosynthesis (diacylglyceryl transfer). In terms of biological role, catalyzes the transfer of the diacylglyceryl group from phosphatidylglycerol to the sulfhydryl group of the N-terminal cysteine of a prolipoprotein, the first step in the formation of mature lipoproteins. The chain is Phosphatidylglycerol--prolipoprotein diacylglyceryl transferase from Cupriavidus necator (strain ATCC 17699 / DSM 428 / KCTC 22496 / NCIMB 10442 / H16 / Stanier 337) (Ralstonia eutropha).